The primary structure comprises 250 residues: Probable syntaxin-8B (250 aa).

Over 1-213 the chain is Cytoplasmic; it reads MGDYWLNEHD…NRRMETIKQN (213 aa). Residues 73-100 are a coiled coil; that stretch reads EKELLRRKNKVESLISMKNQLNSTLDAA. Residues 148 to 210 enclose the t-SNARE coiled-coil homology domain; that stretch reads QHIMREQDES…RNANRRMETI (63 aa). A helical; Anchor for type IV membrane protein membrane pass occupies residues 214–234; the sequence is AGSTCMIVCIVILIILIVVLI. Topologically, residues 235 to 250 are vesicular; sequence ATDSGCKIYNDPKHCP.

This sequence belongs to the syntaxin family.

It localises to the membrane. The polypeptide is Probable syntaxin-8B (syn8B) (Dictyostelium discoideum (Social amoeba)).